A 129-amino-acid chain; its full sequence is 3-aminoacrylate deaminase RutC (129 aa).

It belongs to the RutC family.

It carries out the reaction (Z)-3-aminoacrylate + H2O + H(+) = 3-oxopropanoate + NH4(+). Involved in pyrimidine catabolism. Catalyzes the deamination of 3-aminoacrylate to malonic semialdehyde, a reaction that can also occur spontaneously. RutC may facilitate the reaction and modulate the metabolic fitness, rather than catalyzing essential functions. The sequence is that of 3-aminoacrylate deaminase RutC from Yersinia enterocolitica serotype O:8 / biotype 1B (strain NCTC 13174 / 8081).